Here is a 126-residue protein sequence, read N- to C-terminus: Protein ApaG (126 aa).

In terms of domain architecture, ApaG spans 2–126 (SALDTSIRVE…FRLATPGLLH (125 aa)).

This is Protein ApaG from Shewanella baltica (strain OS223).